A 368-amino-acid polypeptide reads, in one-letter code: Cobalt-precorrin-5B C(1)-methyltransferase (368 aa).

It belongs to the CbiD family.

The catalysed reaction is Co-precorrin-5B + S-adenosyl-L-methionine = Co-precorrin-6A + S-adenosyl-L-homocysteine. Its pathway is cofactor biosynthesis; adenosylcobalamin biosynthesis; cob(II)yrinate a,c-diamide from sirohydrochlorin (anaerobic route): step 6/10. Catalyzes the methylation of C-1 in cobalt-precorrin-5B to form cobalt-precorrin-6A. This is Cobalt-precorrin-5B C(1)-methyltransferase from Brucella anthropi (strain ATCC 49188 / DSM 6882 / CCUG 24695 / JCM 21032 / LMG 3331 / NBRC 15819 / NCTC 12168 / Alc 37) (Ochrobactrum anthropi).